The sequence spans 1789 residues: MMVFQSFILGNLVSLCMKIINSVVVVGLYYGFLTTFSIGPSYLFLLRARVMDEGEEGTEKKVSATTGFIAGQLMMFISIYYAPLHLALGRPHTITVLALPYLLFHFFWNNHKHFFDYGSTTRNEMRNLRIQCVFLNNLIFQLFNHFILPSSMLARLVNIYMFRCNNKMLFVTSSFVGWLIGHILFMKWVGLVLVWIQQNNSIRSNVLIRSNKYKFLVSELRNSMARIFSILLFITCVYYLGRIPSPIFTKKLKGTSETGGTKQDQEVSTAEAPFPSLFSEEGEDLDKIDEMEEIRVNEKDKINKDDEFHVRTYYKTVSENLDGNKENSNLEFFKIKKKEDHFLWFEKPFVTLVFDYKRWNRPNRYIKNDKIENTVRNEMAQYFFYTCQSDGKERIAFTYPPNLSTFFEMIQKRIPSFTREKITSDQVSTYWSLIHEEKKENLKKEFLNRIEALDKGGSVENILEKTTRFCYNEAKKEYLPKIYDPFLHGISRGRIKKLPPFKIITETYRKNNIRGSWINKIHGLLLKLNYHKFEQTIENFNRKSLSIEKKLSFFSEPQQEEKFNSEEEIKIFKFLFDIVRTDSNDQTLIKNFIDFHEINKKVPRWSYKLISELEELEGENEENVPMEPGIRSRKAKRVVVFTDKEPHDEIYTNLKENQNSDQKDEMALIRYSQQSDFRREIIKGSMRSQRRKPVIWEFFQAKVHSPLFFDRIDKLFFFSFDIWGLKKKILKNFISQTKKKNFDKKEEEQSKIEEKRRIEIAETWDSFLFAQIIRGSLLVTQSILRKYIILPLLILIKNSVRMLLFQFPEWSEDLKDWKREMHVKCTYNGVQLSETEFPRNWLTDGIQIKILFPFYLKPWHKSKFQASQKARLKKTKDKGEKNDFCFLTVWGMETELPFGSAQRKPSFFEPISKELKKRIKKLKTKSLVVLRIFKERATIFLKVANEIKNWILKNFIFIKGKIKDLSKRNPISLFGPREIYELNETKKDSIIRNQIIHELSVQNKSMEWTNSSLSENKITNLIDRIKTIRNQIEEISKEKQNLTNNCTKLRYDSKKIESSKKIWQAFKRKNTRLIRKSIFFFKFCIEQLSIAIFLGIINIPKITTQLFFESIKTILDKSIYKNEEKGEKKKNPFYFISTIKNLISNKKKMSYDLCSLSQAYVFYKLSQIKVSNVSKLKDVLEYNICITSFFVKNKIKSFFQEQGIFHYELKNKTFLNSEVNQWKNWLRSHYQYNLPQIAWARLVTQNWKKKINKDSLVLNPSLTKEDSYEKKKFDNYKKQNFFEADSVLNPKHNFKKDYIYNLFCYKSIHPTENFFDMYVGIALDNCLVSSCLEKYNIRGMREIWHRKYVDWRILNFWFTKKVNIEPWVNTKSKKKYINTKVQNYQRIDKITKTDLANQKSFFFDWMGMNEEILNHRITNFEFFFFPEFFLFSSTYKIKPWVIPIKLLLLNFNENINVNKKLTRKKKGFIPSNEKKSLRFYNLNKEEKESAGQFELESDKEKKRNPESALLNQEKNIEENFAESMIKKRQNKKQYKSNTEAELDLFLTRYSRFQLRWNCFFNQKILNNVKVYCLLVRLNNPNEIAISSIERGEMSLDILMIEKNFTFAKLMKKGILIIEPVRLSVQNDGQLIIYRTIGIPLVHKNKHKISKRSKKKSYIDKKIFEKSKTKYQNKTVNRKKKHYDFFVPENILSPKRRREFRILICFNLKKKTARDRNSRFDKNIQNLTTVLHKKKDLNKEKNNLINLKSFLWPKFRLEDLACMNRYWFNTTNGTNFSMIRIRMYTRFPIH.

Transmembrane regions (helical) follow at residues 19-39 (IINS…FSIG), 68-88 (FIAG…HLAL), 91-111 (PHTI…WNNH), 133-153 (VFLN…SSML), 176-196 (VGWL…LVWI), and 227-247 (IFSI…PSPI).

It belongs to the TIC214 family. As to quaternary structure, part of the Tic complex.

The protein resides in the plastid. It localises to the chloroplast inner membrane. Involved in protein precursor import into chloroplasts. May be part of an intermediate translocation complex acting as a protein-conducting channel at the inner envelope. This chain is Protein TIC 214, found in Capsella bursa-pastoris (Shepherd's purse).